Consider the following 126-residue polypeptide: Holo-[acyl-carrier-protein] synthase (126 aa).

Residues aspartate 9 and glutamate 58 each coordinate Mg(2+).

It belongs to the P-Pant transferase superfamily. AcpS family. It depends on Mg(2+) as a cofactor.

It localises to the cytoplasm. The catalysed reaction is apo-[ACP] + CoA = holo-[ACP] + adenosine 3',5'-bisphosphate + H(+). Functionally, transfers the 4'-phosphopantetheine moiety from coenzyme A to a Ser of acyl-carrier-protein. This Yersinia pestis bv. Antiqua (strain Angola) protein is Holo-[acyl-carrier-protein] synthase.